A 963-amino-acid polypeptide reads, in one-letter code: Protein suppressor of white apricot (963 aa).

The SURP motif 1 repeat unit spans residues 234–276; sequence IIEKTARFIATQGAQMEILIKAKQANNTQFDFLTQGGHLQPYY. Disordered regions lie at residues 290-322 and 360-430; these read PAPQ…RRNP and EDES…EPPQ. Positions 300-317 are enriched in basic and acidic residues; sequence NTDKEAPSADDHSEEVAG. A compositionally biased stretch (polar residues) spans 364–375; it reads SNPGNSQHSGGT. Residues 407-418 show a composition bias toward basic and acidic residues; sequence THEEESSNREQQ. S438, S447, S448, and S450 each carry phosphoserine. Residues 445–470 are disordered; sequence NYSSESEEEEDQVQPEKEEEKKPEPV. Over residues 458–468 the composition is skewed to basic and acidic residues; it reads QPEKEEEKKPE. An SURP motif 2 repeat occupies 483 to 523; sequence IIDKTATYVIKNGRQFEETLRTKSVDRFSFLLPANEYYPYY. Disordered stretches follow at residues 593–613, 634–662, and 716–963; these read PQEA…HVRP, TAGQ…ERVK, and PPES…SSSP. The span at 637–651 shows a compositional bias: polar residues; it reads QKGNITASPSCSSPQ. Phosphoserine is present on S649. The span at 652–662 shows a compositional bias: basic and acidic residues; that stretch reads KEQRQAEERVK. Residues 718–727 are compositionally biased toward low complexity; the sequence is ESAAGAATAD. Residues 768–778 are compositionally biased toward acidic residues; sequence DEEDDDEEDGG. Over residues 787-796 the composition is skewed to polar residues; the sequence is NDDSTNTFTS. Positions 799–809 are enriched in pro residues; the sequence is VLPPTAAPPPA. Residues 820-830 show a composition bias toward low complexity; it reads QLVATTSTRSS. The segment covering 831-847 has biased composition (basic residues); it reads SSRHLKTHRRSRSRSKN. The span at 848–858 shows a compositional bias: low complexity; that stretch reads VRSSDSSPSSR. 2 stretches are compositionally biased toward basic residues: residues 861-870 and 882-913; these read SRRRRQKSSR and KSQH…RRSR. A phosphoserine mark is found at S912, S914, and S916. Basic and acidic residues predominate over residues 934–944; the sequence is AEQRRQQDRRR. Over residues 945 to 963 the composition is skewed to basic residues; the sequence is TPTKKSHKRHKRRRRSSSP.

The protein resides in the nucleus speckle. In terms of biological role, regulator of pre-mRNA splicing (and, possibly, of other RNA processing events). Regulates its own expression at the level of RNA processing. This chain is Protein suppressor of white apricot (su(w[a])), found in Drosophila melanogaster (Fruit fly).